Reading from the N-terminus, the 1415-residue chain is MKALLDLFKQVQQEEQFDAIKIGLASPEKIRSWSYGEVKKPETINYRTFKPERDGLFCAKIFGPIKDYECLCGKYKRLKHRGVICEKCGVEVTLAKVRRERMGHIELAAPTAHIWFLKSLPSRLGMVLDMTLRDIERVLYFEAFVVIEPGMTPLKKSQIMSEDDYLAKCDEYGEGEFVAMMGAEGIRELLRGIDIEKQIEQIRAELQATGSEAKIKKFAKRLKVLEAFQRSGIKPEWMILEVLPVLPPELRPLVPLDGGRFATSDLNDLYRRVINRNNRLKRLLELKAPEIIVRNEKRMLQEAVDSLLDNGRRGKAMTGANKRPLKSLAEMIKGKGGRFRQNLLGKRVDYSGRSVIVVGPTLKLHQCGLPKLMALELFKPFIFHKLETMGIATTIKAAKKEVESQTPVVWDILEEVIREHPVMLNRAPTLHRLGIQAFEPVLIEGKAIQLHPLVCAAFNADFDGDQMAVHVPLSLEAQMEARTLMLASNNVLFPANGDPSIVPSQDVVLGLYYTTRDKINGRGEGMTFADISEVIRAYENKEVELASRVNVRITEYELVDKDAEGDARFAPKITLQATTVGRAILSEILPKGLPFSVLNKPLKKKEISRLINTAFRKCGLRETVIFADKLLQSGFRLATRAGISIAIDDMLVPPQKEKIIAEASAKVKEYDKQYMSGLVTDQERYNNVVDIWGAAGDQVGKAMMEQLQHEDVVDREGKTVKQESFNSIYMMADSGARGSAAQIRQLAGMRGLMAKPDGSIIETPITANFREGLNVLQYFISTHGARKGLADTALKTANSGYLTRRLVDVTQDLVVVEDDCGTSNGVAMKALVEGGEVIEALRDRILGRVTVADVVNPETQETAIEAGTLLDEDLVELIDNIGVDEVKVRTPLSCDTRYGLCGKCYGRDLGRGVLVNSGEAVGVIAAQSIGEPGTQLTMRTFHIGGAASRAAVASSVEAKATGTVRFTATMRYVTNAKGELIVISRSGEALITDDHGRERERHKIPYGATLLVQDGQAIKAGTQLATWDALTRPIVSEYTGTTKFENVEEGVTVAKQMDEVTGLSTLVVIDAKRRTAATKGIRPQVKLLDANGQEVKIPGTDHSVTIGFQVGALITVKDGQQVHVGEVLARIPTESQKTRDITGGLPRVAELFEARSPKDAAVLAEVTGTTSFGKDTKGKQRLVITDLDGNAHEFLIAKEKQVLVHDGQVVNKGEMIVEGPADPHDILRLKGIEELAHYIVDEVQDVYRLQGVKINDKHIEVIVRQMLRRVQIADVGDTKFIPGEQVERSELLDENDRVIAEGKRPATYENLLLGITKASLSTDSFISAASFQETTRVLTEAAIMGKTDDLRGLKENVIVGRLIPAGTGLAYHRARKAREASERERAQAIAEEEQSLFIEPAPVVQATTEGEGDNA.

Cysteine 70, cysteine 72, cysteine 85, and cysteine 88 together coordinate Zn(2+). The Mg(2+) site is built by aspartate 461, aspartate 463, and aspartate 465. Positions 820, 894, 901, and 904 each coordinate Zn(2+).

The protein belongs to the RNA polymerase beta' chain family. In terms of assembly, the RNAP catalytic core consists of 2 alpha, 1 beta, 1 beta' and 1 omega subunit. When a sigma factor is associated with the core the holoenzyme is formed, which can initiate transcription. Mg(2+) is required as a cofactor. Requires Zn(2+) as cofactor.

The catalysed reaction is RNA(n) + a ribonucleoside 5'-triphosphate = RNA(n+1) + diphosphate. DNA-dependent RNA polymerase catalyzes the transcription of DNA into RNA using the four ribonucleoside triphosphates as substrates. The polypeptide is DNA-directed RNA polymerase subunit beta' (Cupriavidus necator (strain ATCC 17699 / DSM 428 / KCTC 22496 / NCIMB 10442 / H16 / Stanier 337) (Ralstonia eutropha)).